The primary structure comprises 91 residues: uncharacterized protein (91 aa).

Residues 12–34 (FAIVYANITFLFYYLLDFTLPFH) form a helical membrane-spanning segment.

It is found in the membrane. This is an uncharacterized protein from Saccharomyces cerevisiae (strain ATCC 204508 / S288c) (Baker's yeast).